Here is a 151-residue protein sequence, read N- to C-terminus: D-aminoacyl-tRNA deacylase (151 aa).

Residues 137–138 (GP) carry the Gly-cisPro motif, important for rejection of L-amino acids motif.

Belongs to the DTD family. In terms of assembly, homodimer.

The protein resides in the cytoplasm. The enzyme catalyses glycyl-tRNA(Ala) + H2O = tRNA(Ala) + glycine + H(+). The catalysed reaction is a D-aminoacyl-tRNA + H2O = a tRNA + a D-alpha-amino acid + H(+). In terms of biological role, an aminoacyl-tRNA editing enzyme that deacylates mischarged D-aminoacyl-tRNAs. Also deacylates mischarged glycyl-tRNA(Ala), protecting cells against glycine mischarging by AlaRS. Acts via tRNA-based rather than protein-based catalysis; rejects L-amino acids rather than detecting D-amino acids in the active site. By recycling D-aminoacyl-tRNA to D-amino acids and free tRNA molecules, this enzyme counteracts the toxicity associated with the formation of D-aminoacyl-tRNA entities in vivo and helps enforce protein L-homochirality. This is D-aminoacyl-tRNA deacylase from Acaryochloris marina (strain MBIC 11017).